The following is a 213-amino-acid chain: Orotate phosphoribosyltransferase (213 aa).

A 5-phospho-alpha-D-ribose 1-diphosphate-binding site is contributed by lysine 26. Phenylalanine 34 to phenylalanine 35 serves as a coordination point for orotate. 5-phospho-alpha-D-ribose 1-diphosphate is bound by residues tyrosine 72–lysine 73, arginine 99, lysine 100, lysine 103, histidine 105, and aspartate 124–alanine 132. Residues threonine 128 and arginine 156 each coordinate orotate.

It belongs to the purine/pyrimidine phosphoribosyltransferase family. PyrE subfamily. As to quaternary structure, homodimer. Requires Mg(2+) as cofactor.

The catalysed reaction is orotidine 5'-phosphate + diphosphate = orotate + 5-phospho-alpha-D-ribose 1-diphosphate. The protein operates within pyrimidine metabolism; UMP biosynthesis via de novo pathway; UMP from orotate: step 1/2. Catalyzes the transfer of a ribosyl phosphate group from 5-phosphoribose 1-diphosphate to orotate, leading to the formation of orotidine monophosphate (OMP). This is Orotate phosphoribosyltransferase from Klebsiella pneumoniae subsp. pneumoniae (strain ATCC 700721 / MGH 78578).